The chain runs to 671 residues: UvrABC system protein C (671 aa).

Residues 1–20 (MPHLPDSMSPEAPAGPAPAT) are disordered. A compositionally biased stretch (low complexity) spans 10–20 (PEAPAGPAPAT). The 79-residue stretch at 37-115 (PLPGVYRYFD…IKTLNPKYNI (79 aa)) folds into the GIY-YIG domain. A UVR domain is found at 232–267 (RQVMEALEARMMAHAEKLEFEQAAELRNQVAALSNV).

Belongs to the UvrC family. In terms of assembly, interacts with UvrB in an incision complex.

Its subcellular location is the cytoplasm. Its function is as follows. The UvrABC repair system catalyzes the recognition and processing of DNA lesions. UvrC both incises the 5' and 3' sides of the lesion. The N-terminal half is responsible for the 3' incision and the C-terminal half is responsible for the 5' incision. The sequence is that of UvrABC system protein C from Albidiferax ferrireducens (strain ATCC BAA-621 / DSM 15236 / T118) (Rhodoferax ferrireducens).